The primary structure comprises 180 residues: Ribulose bisphosphate carboxylase small subunit, chloroplastic 2 (180 aa).

The transit peptide at 1–56 (MASSVMSSAAVATSTNAAQASMVAPFTGLKSAASFPVSRKQNLDITSIASNGGRVQ) directs the protein to the chloroplast.

This sequence belongs to the RuBisCO small chain family. As to quaternary structure, heterohexadecamer of 8 large and 8 small subunits.

The protein resides in the plastid. Its subcellular location is the chloroplast. Its function is as follows. RuBisCO catalyzes two reactions: the carboxylation of D-ribulose 1,5-bisphosphate, the primary event in carbon dioxide fixation, as well as the oxidative fragmentation of the pentose substrate. Both reactions occur simultaneously and in competition at the same active site. Although the small subunit is not catalytic it is essential for maximal activity. The polypeptide is Ribulose bisphosphate carboxylase small subunit, chloroplastic 2 (Petunia hybrida (Petunia)).